Reading from the N-terminus, the 138-residue chain is ATP synthase epsilon chain (138 aa).

It belongs to the ATPase epsilon chain family. F-type ATPases have 2 components, CF(1) - the catalytic core - and CF(0) - the membrane proton channel. CF(1) has five subunits: alpha(3), beta(3), gamma(1), delta(1), epsilon(1). CF(0) has three main subunits: a, b and c.

It localises to the cell membrane. Its function is as follows. Produces ATP from ADP in the presence of a proton gradient across the membrane. This chain is ATP synthase epsilon chain, found in Caldanaerobacter subterraneus subsp. tengcongensis (strain DSM 15242 / JCM 11007 / NBRC 100824 / MB4) (Thermoanaerobacter tengcongensis).